A 208-amino-acid polypeptide reads, in one-letter code: Ribosome maturation factor RimP (208 aa).

The interval 175-208 (GEDVEDLVADPGADDELDELDELDELDDGDEDEQ) is disordered. Positions 177 to 208 (DVEDLVADPGADDELDELDELDELDDGDEDEQ) are enriched in acidic residues.

It belongs to the RimP family.

It localises to the cytoplasm. Its function is as follows. Required for maturation of 30S ribosomal subunits. This is Ribosome maturation factor RimP from Kineococcus radiotolerans (strain ATCC BAA-149 / DSM 14245 / SRS30216).